Consider the following 145-residue polypeptide: 3-hydroxyacyl-[acyl-carrier-protein] dehydratase FabZ (145 aa).

H47 is a catalytic residue.

Belongs to the thioester dehydratase family. FabZ subfamily.

Its subcellular location is the cytoplasm. It catalyses the reaction a (3R)-hydroxyacyl-[ACP] = a (2E)-enoyl-[ACP] + H2O. Its function is as follows. Involved in unsaturated fatty acids biosynthesis. Catalyzes the dehydration of short chain beta-hydroxyacyl-ACPs and long chain saturated and unsaturated beta-hydroxyacyl-ACPs. In Chromohalobacter salexigens (strain ATCC BAA-138 / DSM 3043 / CIP 106854 / NCIMB 13768 / 1H11), this protein is 3-hydroxyacyl-[acyl-carrier-protein] dehydratase FabZ.